We begin with the raw amino-acid sequence, 512 residues long: Metal transporter Nramp4 (512 aa).

12 consecutive transmembrane segments (helical) span residues 52–72 (LWLF…PGNL), 80–100 (AIAG…GLLI), 129–149 (MVLW…EVIG), 161–181 (LVPL…FLFL), 189–209 (LEAV…WMFG), 235–255 (AVGI…SALV), 277–297 (IEST…TTVF), 323–343 (YGGG…AAGQ), 371–391 (ALIT…VFDS), 402–422 (WLNV…LCLV), 440–460 (ISWI…VDFF), and 468–488 (ILLV…LYLI).

This sequence belongs to the NRAMP (TC 2.A.55) family. In terms of tissue distribution, expressed in vascular tissues.

It localises to the vacuole membrane. Its function is as follows. Vacuolar metal transporter involved in intracellular metal homeostasis. Can transport iron (Fe), manganese (Mn) and cadmium (Cd). Regulates metal accumulation under Fe starvation. Acts redundantly with NRAMP3 to mobilize vacuolar Fe and provide sufficient Fe during seed germination. In association with NRAMP3, required for optimal growth and photosynthesis under Mn deficiency. Exports Mn from vacuoles in leaf mesophyll cells, making Mn available for functional photosystem II in chloroplasts. This Arabidopsis thaliana (Mouse-ear cress) protein is Metal transporter Nramp4 (NRAMP4).